The following is a 322-amino-acid chain: uncharacterized protein (322 aa).

The stretch at 205-286 (QEIKNAHAAL…LKKAISEAVQ (82 aa)) forms a coiled coil. 2 stretches are compositionally biased toward basic and acidic residues: residues 254–281 (EKEE…KKAI) and 290–299 (DRIEAIEKSR). Residues 254 to 322 (EKEEELNKKD…VQKSIWSGLF (69 aa)) form a disordered region. The segment covering 310 to 322 (SEQVQKSIWSGLF) has biased composition (polar residues).

To B.subtilis XkdF.

This is an uncharacterized protein from Bacillus subtilis (strain 168).